A 313-amino-acid chain; its full sequence is Methionyl-tRNA formyltransferase (313 aa).

Position 109–112 (serine 109–proline 112) interacts with (6S)-5,6,7,8-tetrahydrofolate.

Belongs to the Fmt family.

The catalysed reaction is L-methionyl-tRNA(fMet) + (6R)-10-formyltetrahydrofolate = N-formyl-L-methionyl-tRNA(fMet) + (6S)-5,6,7,8-tetrahydrofolate + H(+). Its function is as follows. Attaches a formyl group to the free amino group of methionyl-tRNA(fMet). The formyl group appears to play a dual role in the initiator identity of N-formylmethionyl-tRNA by promoting its recognition by IF2 and preventing the misappropriation of this tRNA by the elongation apparatus. In Thermotoga sp. (strain RQ2), this protein is Methionyl-tRNA formyltransferase.